A 334-amino-acid polypeptide reads, in one-letter code: Spermidine synthase 1 (334 aa).

Basic and acidic residues predominate over residues 1–16; sequence MDAKETSATDLKRPRE. Residues 1-35 are disordered; the sequence is MDAKETSATDLKRPREEDDNGGAATMETENGDQKK. In terms of domain architecture, PABS spans 45–282; sequence PGWFSEMSPM…GVIGFMLCST (238 aa). An S-adenosyl 3-(methylsulfanyl)propylamine-binding site is contributed by Gln76. Tyr106 provides a ligand contact to putrescine. S-adenosyl 3-(methylsulfanyl)propylamine is bound by residues Gln107, Asp131, Glu151, 182 to 183, and Asp201; that span reads DG. Asp201 (proton acceptor) is an active-site residue. Putrescine contacts are provided by residues 201-204 and Tyr270; that span reads DSSD.

The protein belongs to the spermidine/spermine synthase family. Homotetramer and heterodimer. Component of a multiprotein complex. Interacts with SPMS and SPDSYN2.

The enzyme catalyses S-adenosyl 3-(methylsulfanyl)propylamine + putrescine = S-methyl-5'-thioadenosine + spermidine + H(+). The protein operates within amine and polyamine biosynthesis; spermidine biosynthesis; spermidine from putrescine: step 1/1. This is Spermidine synthase 1 (SPDSYN1) from Arabidopsis thaliana (Mouse-ear cress).